Reading from the N-terminus, the 199-residue chain is GTP cyclohydrolase-2 (199 aa).

50 to 54 (RIHSE) contacts GTP. Positions 55, 66, and 68 each coordinate Zn(2+). GTP contacts are provided by residues Gln71, 93-95 (EGR), and Thr115. Asp127 acts as the Proton acceptor in catalysis. The active-site Nucleophile is Arg129. Thr150 and Lys155 together coordinate GTP.

The protein belongs to the GTP cyclohydrolase II family. As to quaternary structure, homodimer. The cofactor is Zn(2+).

The catalysed reaction is GTP + 4 H2O = 2,5-diamino-6-hydroxy-4-(5-phosphoribosylamino)-pyrimidine + formate + 2 phosphate + 3 H(+). The protein operates within cofactor biosynthesis; riboflavin biosynthesis; 5-amino-6-(D-ribitylamino)uracil from GTP: step 1/4. Its function is as follows. Catalyzes the conversion of GTP to 2,5-diamino-6-ribosylamino-4(3H)-pyrimidinone 5'-phosphate (DARP), formate and pyrophosphate. This chain is GTP cyclohydrolase-2, found in Buchnera aphidicola subsp. Baizongia pistaciae (strain Bp).